Here is a 115-residue protein sequence, read N- to C-terminus: UPF0738 protein SERP0585 (115 aa).

It belongs to the UPF0738 family.

The chain is UPF0738 protein SERP0585 from Staphylococcus epidermidis (strain ATCC 35984 / DSM 28319 / BCRC 17069 / CCUG 31568 / BM 3577 / RP62A).